An 85-amino-acid polypeptide reads, in one-letter code: Large ribosomal subunit protein bL27 (85 aa).

Residues 1–26 (MAHKKGVGSSRNGRDSNPKMLGVKRF) are disordered.

It belongs to the bacterial ribosomal protein bL27 family.

This Roseiflexus sp. (strain RS-1) protein is Large ribosomal subunit protein bL27.